We begin with the raw amino-acid sequence, 107 residues long: Virulence factor PGA16 (107 aa).

A signal peptide spans 1–18 (MRVFQIVYILIISNLIYA). The segment at 26 to 56 (SHHHKNDNNIADNTNNNNNNNNNNNNNNITN) is disordered. Low complexity predominate over residues 33 to 56 (NNIADNTNNNNNNNNNNNNNNITN). N-linked (GlcNAc...) asparagine glycosylation is found at Asn-53 and Asn-56. Gly-76 carries GPI-anchor amidated glycine lipidation. A propeptide spans 77–107 (VAAMGGILGQNGWFYGDAGLMAAIFGAMLLL) (removed in mature form).

It localises to the cell membrane. Cell surface GPI-anchored protein required for virulence. Mediates hyphal ramification which is important for the interaction with host cells. In Candida albicans (strain SC5314 / ATCC MYA-2876) (Yeast), this protein is Virulence factor PGA16 (PGA16).